Consider the following 124-residue polypeptide: Flowering-promoting factor 1-like protein 1 (124 aa).

A disordered region spans residues Pro-19–Arg-42. Over residues Gln-22 to Gln-39 the composition is skewed to low complexity.

It belongs to the FPF1 family. In terms of tissue distribution, expressed in roots, flowers, and at a low level, in leaves.

Functionally, modulates the competence to flowering of apical meristems. The sequence is that of Flowering-promoting factor 1-like protein 1 (FLP1) from Arabidopsis thaliana (Mouse-ear cress).